A 366-amino-acid chain; its full sequence is tRNA-queuosine alpha-mannosyltransferase (366 aa).

This sequence belongs to the glycosyltransferase group 1 family. Glycosyltransferase 4 subfamily.

It localises to the cytoplasm. The protein resides in the nucleus. The enzyme catalyses queuosine(34) in tRNA(Asp) + GDP-alpha-D-mannose = O-4''-alpha-D-mannosylqueuosine(34) in tRNA(Asp) + GDP + H(+). Glycosyltransferase that specifically catalyzes mannosylation of cytoplasmic tRNA(Asp) modified with queuosine at position 34 (queuosine(34)). Mannosylates the cyclopentene moiety of queuosine(34) in tRNA(Asp) to form mannosyl-queuosine(34). Mannosylation of queuosine(34) in tRNA(Asp) is required to slow-down elongation at cognate codons, GAC and GAU, thereby regulating protein translation. This is tRNA-queuosine alpha-mannosyltransferase (GTDC1) from Bos taurus (Bovine).